A 352-amino-acid chain; its full sequence is Ketoisovalerate oxidoreductase subunit VorB (352 aa).

Heterotrimer of the VorA, VorB and VorC subunits.

It catalyses the reaction 3-methyl-2-oxobutanoate + 2 oxidized [2Fe-2S]-[ferredoxin] + CoA = 2-methylpropanoyl-CoA + 2 reduced [2Fe-2S]-[ferredoxin] + CO2 + H(+). The polypeptide is Ketoisovalerate oxidoreductase subunit VorB (vorB) (Methanothermobacter thermautotrophicus (strain ATCC 29096 / DSM 1053 / JCM 10044 / NBRC 100330 / Delta H) (Methanobacterium thermoautotrophicum)).